A 562-amino-acid polypeptide reads, in one-letter code: Oxygen-dependent choline dehydrogenase (562 aa).

4–33 (DYIIIGAGSAGNVLATRLTEDPNTSVLLLE) is an FAD binding site. The active-site Proton acceptor is the His-473.

This sequence belongs to the GMC oxidoreductase family. The cofactor is FAD.

Its subcellular location is the cell membrane. It carries out the reaction choline + A = betaine aldehyde + AH2. The catalysed reaction is betaine aldehyde + NAD(+) + H2O = glycine betaine + NADH + 2 H(+). Its pathway is amine and polyamine biosynthesis; betaine biosynthesis via choline pathway; betaine aldehyde from choline (cytochrome c reductase route): step 1/1. Involved in the biosynthesis of the osmoprotectant glycine betaine. Catalyzes the oxidation of choline to betaine aldehyde and betaine aldehyde to glycine betaine at the same rate. The sequence is that of Oxygen-dependent choline dehydrogenase from Escherichia coli O157:H7.